The sequence spans 436 residues: MLADEVLELLSAEISPNEYEYYIKQLKFNEKASSDETVVFNAPNELIAKFIKTKYATKIAHLFEVKTGTKPNVEITTQTKLKSSKQNQVNIKQIKAQSTLLNPAYTFENFVVGGSNEYAFLSAKAASEQPGKIYNPLFIYGPTGLGKTHLLQSVGNFCLNQGKVVICVTSEQFMTDFTYNINNHSMERFREKYRNCDVLLIDDVQFLGKTDKIQEEFFHTFNELHSKNGQIVMTSDRQPKLLKGFEDRLRTRFEWGIMADITPPELDTKIAIIQKKCEFDKIYLNKDVINYIATNMGDNIREIESAIINLNAYANLMRQEITLDFAKNVMRDLIKEKRENINLENIIEVVSKELNIKPSDIKSKSRVQNIVEARRIVIYLAKMLTTNSMPQIANYFSMKDHSAVSHNIKKINELIENNEIFNLRVSELKNKILTKG.

Positions 1–69 are domain I, interacts with DnaA modulators; the sequence is MLADEVLELL…AHLFEVKTGT (69 aa). The tract at residues 69–99 is domain II; the sequence is TKPNVEITTQTKLKSSKQNQVNIKQIKAQST. The interval 100-314 is domain III, AAA+ region; sequence LLNPAYTFEN…SAIINLNAYA (215 aa). ATP-binding residues include Gly144, Gly146, Lys147, and Thr148. The interval 315-436 is domain IV, binds dsDNA; it reads NLMRQEITLD…ELKNKILTKG (122 aa).

It belongs to the DnaA family. Oligomerizes as a right-handed, spiral filament on DNA at oriC.

The protein resides in the cytoplasm. Its function is as follows. Plays an essential role in the initiation and regulation of chromosomal replication. ATP-DnaA binds to the origin of replication (oriC) to initiate formation of the DNA replication initiation complex once per cell cycle. Binds the DnaA box (a 9 base pair repeat at the origin) and separates the double-stranded (ds)DNA. Forms a right-handed helical filament on oriC DNA; dsDNA binds to the exterior of the filament while single-stranded (ss)DNA is stabiized in the filament's interior. The ATP-DnaA-oriC complex binds and stabilizes one strand of the AT-rich DNA unwinding element (DUE), permitting loading of DNA polymerase. After initiation quickly degrades to an ADP-DnaA complex that is not apt for DNA replication. Binds acidic phospholipids. The chain is Chromosomal replication initiator protein DnaA from Campylobacter curvus (strain 525.92).